Here is an 879-residue protein sequence, read N- to C-terminus: DNA mismatch repair protein MutS (879 aa).

629 to 636 (GPNMAGKS) is an ATP binding site. The segment at 824 to 845 (VGGQPQKELSEHKPHQPSLFAP) is disordered.

The protein belongs to the DNA mismatch repair MutS family.

This protein is involved in the repair of mismatches in DNA. It is possible that it carries out the mismatch recognition step. This protein has a weak ATPase activity. The polypeptide is DNA mismatch repair protein MutS (Desulfotalea psychrophila (strain LSv54 / DSM 12343)).